A 122-amino-acid chain; its full sequence is Small ribosomal subunit protein uS13 (122 aa).

The interval 94 to 122 (SLPVRGQRTKTNARTRKVHVSRSKNSRGK) is disordered.

It belongs to the universal ribosomal protein uS13 family. As to quaternary structure, part of the 30S ribosomal subunit. Forms a loose heterodimer with protein S19. Forms two bridges to the 50S subunit in the 70S ribosome.

Functionally, located at the top of the head of the 30S subunit, it contacts several helices of the 16S rRNA. In the 70S ribosome it contacts the 23S rRNA (bridge B1a) and protein L5 of the 50S subunit (bridge B1b), connecting the 2 subunits; these bridges are implicated in subunit movement. Contacts the tRNAs in the A and P-sites. In Haemophilus influenzae (strain ATCC 51907 / DSM 11121 / KW20 / Rd), this protein is Small ribosomal subunit protein uS13.